The chain runs to 192 residues: Fe/S biogenesis protein NfuA (192 aa).

2 residues coordinate [4Fe-4S] cluster: C149 and C152.

This sequence belongs to the NfuA family. As to quaternary structure, homodimer. [4Fe-4S] cluster serves as cofactor.

Functionally, involved in iron-sulfur cluster biogenesis. Binds a 4Fe-4S cluster, can transfer this cluster to apoproteins, and thereby intervenes in the maturation of Fe/S proteins. Could also act as a scaffold/chaperone for damaged Fe/S proteins. This is Fe/S biogenesis protein NfuA from Idiomarina loihiensis (strain ATCC BAA-735 / DSM 15497 / L2-TR).